The chain runs to 349 residues: Uroporphyrinogen decarboxylase (349 aa).

Substrate-binding positions include 23-27 (RQAGR), Asp71, Tyr148, Ser203, and His317.

The protein belongs to the uroporphyrinogen decarboxylase family. Homodimer.

It is found in the cytoplasm. The catalysed reaction is uroporphyrinogen III + 4 H(+) = coproporphyrinogen III + 4 CO2. The protein operates within porphyrin-containing compound metabolism; protoporphyrin-IX biosynthesis; coproporphyrinogen-III from 5-aminolevulinate: step 4/4. In terms of biological role, catalyzes the decarboxylation of four acetate groups of uroporphyrinogen-III to yield coproporphyrinogen-III. This chain is Uroporphyrinogen decarboxylase, found in Sorangium cellulosum (strain So ce56) (Polyangium cellulosum (strain So ce56)).